A 263-amino-acid chain; its full sequence is Ribosomal RNA small subunit methyltransferase A (263 aa).

S-adenosyl-L-methionine-binding residues include His-13, Leu-15, Gly-40, Glu-61, Asp-86, and Asn-105.

Belongs to the class I-like SAM-binding methyltransferase superfamily. rRNA adenine N(6)-methyltransferase family. RsmA subfamily.

The protein resides in the cytoplasm. It carries out the reaction adenosine(1518)/adenosine(1519) in 16S rRNA + 4 S-adenosyl-L-methionine = N(6)-dimethyladenosine(1518)/N(6)-dimethyladenosine(1519) in 16S rRNA + 4 S-adenosyl-L-homocysteine + 4 H(+). Its function is as follows. Specifically dimethylates two adjacent adenosines (A1518 and A1519) in the loop of a conserved hairpin near the 3'-end of 16S rRNA in the 30S particle. May play a critical role in biogenesis of 30S subunits. The chain is Ribosomal RNA small subunit methyltransferase A from Dichelobacter nodosus (strain VCS1703A).